We begin with the raw amino-acid sequence, 480 residues long: Proline--tRNA ligase (480 aa).

The protein belongs to the class-II aminoacyl-tRNA synthetase family. ProS type 3 subfamily. In terms of assembly, homodimer.

Its subcellular location is the cytoplasm. The catalysed reaction is tRNA(Pro) + L-proline + ATP = L-prolyl-tRNA(Pro) + AMP + diphosphate. Its function is as follows. Catalyzes the attachment of proline to tRNA(Pro) in a two-step reaction: proline is first activated by ATP to form Pro-AMP and then transferred to the acceptor end of tRNA(Pro). The protein is Proline--tRNA ligase of Pyrococcus horikoshii (strain ATCC 700860 / DSM 12428 / JCM 9974 / NBRC 100139 / OT-3).